The following is a 538-amino-acid chain: Phosphoenolpyruvate carboxykinase (ATP) (538 aa).

The substrate site is built by R64, Y206, and K212. ATP-binding positions include K212, H231, and 247–255 (GLSGTGKTT). Mn(2+)-binding residues include K212 and H231. D268 is a Mn(2+) binding site. Residues E296, R332, 448–449 (RI), and T454 contribute to the ATP site. A substrate-binding site is contributed by R332.

It belongs to the phosphoenolpyruvate carboxykinase (ATP) family. Monomer. Requires Mn(2+) as cofactor.

It localises to the cytoplasm. It carries out the reaction oxaloacetate + ATP = phosphoenolpyruvate + ADP + CO2. It participates in carbohydrate biosynthesis; gluconeogenesis. In terms of biological role, involved in the gluconeogenesis. Catalyzes the conversion of oxaloacetate (OAA) to phosphoenolpyruvate (PEP) through direct phosphoryl transfer between the nucleoside triphosphate and OAA. This chain is Phosphoenolpyruvate carboxykinase (ATP), found in Enterobacter sp. (strain 638).